The following is a 66-amino-acid chain: UPF0434 protein Nwi_0075 (66 aa).

The protein belongs to the UPF0434 family.

In Nitrobacter winogradskyi (strain ATCC 25391 / DSM 10237 / CIP 104748 / NCIMB 11846 / Nb-255), this protein is UPF0434 protein Nwi_0075.